The chain runs to 305 residues: Glycerol-3-phosphate dehydrogenase [NAD(P)+] (305 aa).

Positions 10, 29, and 87 each coordinate NADPH. Sn-glycerol 3-phosphate is bound by residues Lys-87, Gly-115, and Ser-117. An NADPH-binding site is contributed by Ala-119. Sn-glycerol 3-phosphate contacts are provided by Lys-170, Asp-223, Ser-233, Arg-234, and Asn-235. Lys-170 acts as the Proton acceptor in catalysis. Arg-234 lines the NADPH pocket. Glu-255 provides a ligand contact to NADPH.

Belongs to the NAD-dependent glycerol-3-phosphate dehydrogenase family.

It localises to the cytoplasm. It carries out the reaction sn-glycerol 3-phosphate + NAD(+) = dihydroxyacetone phosphate + NADH + H(+). The catalysed reaction is sn-glycerol 3-phosphate + NADP(+) = dihydroxyacetone phosphate + NADPH + H(+). The protein operates within membrane lipid metabolism; glycerophospholipid metabolism. Functionally, catalyzes the reduction of the glycolytic intermediate dihydroxyacetone phosphate (DHAP) to sn-glycerol 3-phosphate (G3P), the key precursor for phospholipid synthesis. This chain is Glycerol-3-phosphate dehydrogenase [NAD(P)+], found in Cereibacter sphaeroides (strain ATCC 17023 / DSM 158 / JCM 6121 / CCUG 31486 / LMG 2827 / NBRC 12203 / NCIMB 8253 / ATH 2.4.1.) (Rhodobacter sphaeroides).